A 67-amino-acid chain; its full sequence is Small ribosomal subunit protein bS21 (67 aa).

This sequence belongs to the bacterial ribosomal protein bS21 family.

The polypeptide is Small ribosomal subunit protein bS21 (Paramagnetospirillum magneticum (strain ATCC 700264 / AMB-1) (Magnetospirillum magneticum)).